A 246-amino-acid polypeptide reads, in one-letter code: E3 ubiquitin-protein ligase MARCHF2 (246 aa).

An RING-CH-type zinc finger spans residues 56–116; sequence DSQSDCPFCR…ELCHTEFAVE (61 aa). Zn(2+) is bound by residues Cys-64, Cys-67, Cys-80, Cys-82, His-90, Cys-93, Cys-106, and Cys-109. The interval 121 to 246 is required for interaction with IKBKG; it reads PLTEWLKDPG…LKKVAEETPV (126 aa). The next 2 helical transmembrane spans lie at 138-158 and 175-195; these read LCCD…SGWL and AVGL…WTLV.

In terms of assembly, interacts with STX6; the interaction promotes MARCHF2-mediated ubiquitination and degradation of CFTR. Interacts with MARCHF3. Interacts with GOPC/CAL; the interaction leads to CFTR ubiquitination and degradation. Interacts with CFTR; the interaction leads to CFTR ubiqtuitination and degradation. Interacts (via PDZ domain) with DLG1 (via PDZ domains); the interaction leads to DLG1 ubiqtuitination and degradation. Interacts with ERGIC3. Interacts with ADRB2. Interacts with IKBKG/NEMO; during the late stages of macrophage viral and bacterial infection; the interaction leads to ubiquitination and degradation of IKBKG/NEMO.

It localises to the endoplasmic reticulum membrane. The protein resides in the lysosome membrane. It is found in the endosome membrane. The protein localises to the golgi apparatus membrane. Its subcellular location is the cytoplasm. It localises to the cell membrane. The catalysed reaction is S-ubiquitinyl-[E2 ubiquitin-conjugating enzyme]-L-cysteine + [acceptor protein]-L-lysine = [E2 ubiquitin-conjugating enzyme]-L-cysteine + N(6)-ubiquitinyl-[acceptor protein]-L-lysine.. It participates in protein modification; protein ubiquitination. Its function is as follows. E3 ubiquitin-protein ligase that may mediate ubiquitination of TFRC and CD86, and promote their subsequent endocytosis and sorting to lysosomes via multivesicular bodies. E3 ubiquitin ligases accept ubiquitin from an E2 ubiquitin-conjugating enzyme in the form of a thioester and then directly transfer the ubiquitin to targeted substrates. Together with GOPC/CAL mediates the ubiquitination and lysosomal degradation of CFTR. Ubiquitinates and therefore mediates the degradation of DLG1. Regulates the intracellular trafficking and secretion of alpha1-antitrypsin/SERPINA1 and HP/haptoglobin via ubiquitination and degradation of the cargo receptor ERGIC3. Negatively regulates the antiviral and antibacterial immune response by repression of the NF-kB and type 1 IFN signaling pathways, via MARCHF2-mediated K48-linked polyubiquitination of IKBKG/NEMO, resulting in its proteasomal degradation. May be involved in endosomal trafficking through interaction with STX6. This Mus musculus (Mouse) protein is E3 ubiquitin-protein ligase MARCHF2 (Marchf2).